A 619-amino-acid polypeptide reads, in one-letter code: Very-long-chain aldehyde decarbonylase GL1-1 (619 aa).

5 helical membrane-spanning segments follow: residues 44-64 (LLLL…WSSF), 93-113 (DNFL…FPSL), 123-143 (GLAV…YAAH), 190-210 (AAAC…VLGF), and 322-342 (PFLL…WAWS). In terms of domain architecture, Fatty acid hydroxylase spans 129-269 (LLHVAATEPL…MPLFDLIGGT (141 aa)).

This sequence belongs to the sterol desaturase family. As to quaternary structure, homodimer.

It localises to the endoplasmic reticulum membrane. The catalysed reaction is a long-chain fatty aldehyde + 2 NADPH + O2 + H(+) = a long-chain alkane + formate + 2 NADP(+) + H2O. In terms of biological role, aldehyde decarbonylase involved in the conversion of aldehydes to alkanes. Core component of a very-long-chain alkane synthesis complex. This Oryza sativa subsp. indica (Rice) protein is Very-long-chain aldehyde decarbonylase GL1-1.